A 326-amino-acid chain; its full sequence is Probable cell division protein WhiA (326 aa).

Residues 275–308 (SLEELGALADPPLTKDAIAGRIRRLLALADKRAR) constitute a DNA-binding region (H-T-H motif).

Belongs to the WhiA family.

In terms of biological role, involved in cell division and chromosome segregation. This Salinispora tropica (strain ATCC BAA-916 / DSM 44818 / JCM 13857 / NBRC 105044 / CNB-440) protein is Probable cell division protein WhiA.